A 2442-amino-acid polypeptide reads, in one-letter code: Histone lysine acetyltransferase CREBBP (2442 aa).

Disordered stretches follow at residues 1–40 (MAEN…ENDL) and 74–168 (RGGS…PATS). Alanine 2 carries the post-translational modification N-acetylalanine. The segment covering 20 to 30 (PGFSANDSTDF) has biased composition (polar residues). Serine 120 carries the post-translational modification Phosphoserine. A compositionally biased stretch (polar residues) spans 125–168 (GDSSTPSLPKQAASTSGPTPPASQALNPQAQKQVGLVTSSPATS). Position 219 is an omega-N-methylarginine (arginine 219). The interaction with SRCAP stretch occupies residues 226 to 409 (PAPAMQGATS…GKACQVAHCA (184 aa)). Residues 261 to 272 (GGMTKMGMTGNT) are compositionally biased toward low complexity. The interval 261-290 (GGMTKMGMTGNTSPFGQPFSQTGGQPMGAT) is disordered. Over residues 273–284 (SPFGQPFSQTGG) the composition is skewed to polar residues. A TAZ-type 1 zinc finger spans residues 346–432 (DPEKRKLIQQ…RHDCPVCLPL (87 aa)). Residues histidine 362, cysteine 366, cysteine 379, cysteine 384, histidine 393, cysteine 397, cysteine 403, cysteine 408, histidine 417, cysteine 421, cysteine 426, and cysteine 429 each coordinate Zn(2+). The KIX domain maps to 586-665 (GVRKGWHEHV…KIYKIQKELE (80 aa)). Asymmetric dimethylarginine occurs at positions 600 and 624. Lysine 656 carries the N6-acetyllysine modification. Polar residues predominate over residues 792 to 825 (FLPQNQFPSSSGAMSVNSVGMGQPATQAGVSQGQ). Positions 792–1084 (FLPQNQFPSS…STSPSQPRKK (293 aa)) are disordered. 2 stretches are compositionally biased toward pro residues: residues 846 to 862 (PCPP…PPPA) and 874 to 887 (PTPP…PAAP). The segment covering 894–906 (VSSGQTPTPTPGS) has biased composition (polar residues). 2 stretches are compositionally biased toward low complexity: residues 909–930 (SAAQ…VTPQ) and 938–957 (PSVA…HTQP). Over residues 974 to 989 (PTPSSVTSAETSSQQP) the composition is skewed to polar residues. A Glycyl lysine isopeptide (Lys-Gly) (interchain with G-Cter in SUMO1) cross-link involves residue lysine 999. The span at 1012–1022 (AESKGEPRSEM) shows a compositional bias: basic and acidic residues. Position 1015 is an N6-acetyllysine (lysine 1015). Position 1031 is a phosphoserine (serine 1031). Basic and acidic residues predominate over residues 1033-1060 (VKEETDTTEQKSEPMEVEEKKPEVKVEA). Glycyl lysine isopeptide (Lys-Gly) (interchain with G-Cter in SUMO1) cross-links involve residues lysine 1034 and lysine 1057. The segment covering 1067 to 1080 (SANGTASQSTSPSQ) has biased composition (polar residues). Serine 1077 carries the phosphoserine modification. Residues 1086 to 1193 (FKPEELRQAL…EVFEQEIDPV (108 aa)) form the Bromo domain. An interaction with histone region spans residues 1125-1171 (DYFDIVKNPMDLSTIKRKLDTGQYQEPWQYVDDVWLMFNNAWLYNRK). The interaction with ASF1A stretch occupies residues 1163–1181 (NNAWLYNRKTSRVYKFCSK). Lysine 1217 carries the N6-acetyllysine modification. The CBP/p300-type HAT domain maps to 1324-1701 (KFSAKRLQTT…MLVELHTQGQ (378 aa)). A phosphoserine; by IKKA mark is found at serine 1383 and serine 1387. Residues 1434–1436 (YLD) are interaction with histone. Acetyl-CoA contacts are provided by residues 1435-1437 (LDS), 1447-1448 (RT), isoleucine 1494, arginine 1499, and tryptophan 1503. The stretch at 1548–1575 (NVLEESIKELEQEEEERKKEESTAASET) forms a coiled coil. The segment covering 1557 to 1569 (LEQEEEERKKEES) has biased composition (basic and acidic residues). Residues 1557 to 1616 (LEQEEEERKKEESTAASETPEGSQGDSKNAKKKNNKKTNKNKSSISRANKKKPSMPNVSN) form a disordered region. N6-acetyllysine is present on residues lysine 1584, lysine 1592, lysine 1593, lysine 1596, and lysine 1598. Over residues 1586–1596 (AKKKNNKKTNK) the composition is skewed to basic residues. The ZZ-type zinc finger occupies 1703-1751 (RFVYTCNECKHHVETRWHCTVCEDYDLCINCYNTKSHTHKMVKWGLGLD). Zn(2+)-binding residues include cysteine 1708, cysteine 1711, cysteine 1721, cysteine 1724, cysteine 1730, cysteine 1733, histidine 1739, and histidine 1741. Lysine 1742 and lysine 1745 each carry N6-acetyllysine. The residue at position 1764 (serine 1764) is a Phosphoserine. A TAZ-type 2 zinc finger spans residues 1766-1847 (QESRRLSIQR…KCPVPFCLNI (82 aa)). The interval 1875–1960 (TRNVPQQSLP…QPPPAAVEAA (86 aa)) is disordered. Composition is skewed to pro residues over residues 1901–1913 (PQTP…PQPS) and 1944–1955 (PAPPPPAQPPPA). Serine 2064, serine 2077, and serine 2080 each carry phosphoserine. Residues 2112-2421 (NQPGMQPQPG…LNTPNRSALS (310 aa)) form a disordered region. Low complexity-rich tracts occupy residues 2113-2138 (QPGM…HQQP), 2197-2217 (QLLQ…QQQQ), 2261-2280 (MGQM…PGLG), and 2287-2305 (IQQA…KQQI). 2 stretches are compositionally biased toward polar residues: residues 2315–2327 (SPQQ…QPQA) and 2334–2343 (QIATSLSNQV). A compositionally biased stretch (pro residues) spans 2349 to 2372 (VQSPRPQSQPPHSSPSPRIQPQPS). Position 2351 is a phosphoserine (serine 2351). Over residues 2411–2421 (QLNTPNRSALS) the composition is skewed to polar residues.

Part of a complex composed of MSX3, CREBBP/CBP AND EP300/p300; the interaction with MSX3 decreases histone acetylation activity. Found in a complex containing NCOA2; NCOA3; IKKA; IKKB and IKBKG. Probably part of a complex with HIF1A and EP300. Interacts with phosphorylated CREB1. Interacts with the C-terminal region of CITED4. The TAZ-type 1 domain interacts with HIF1A. Interacts with SRCAP, CARM1, ELF3, MLLT7/FOXO4, N4BP2, NCOA1, NCOA3, NCOA6, PCAF, DDX5, DDX17, PELP1, PML, SMAD1, SMAD2, SMAD3, SPIB, TRERF1 and ZCCHC12. Interacts with KLF1; the interaction results in acetylation and enhancement of transcriptional activity of KLF1. Interacts with DAXX; the interaction is dependent on CBP sumoylation and results in suppression of the transcriptional activity via recruitment of HDAC2 to DAXX. Interacts with MAF. Interacts with MTDH. Interacts with MAFG; the interaction acetylates MAFG in the basic region and stimulates NFE2 transcriptional activity through increasing its DNA-binding activity. Interacts with IRF2; the interaction acetylates IRF2 and regulates its activity on the H4 promoter. Interacts (via N-terminus) with SS18L1/CREST (via C-terminus). Interacts with IRF3 (when phosphorylated); forming the dsRNA-activated factor 1 (DRAF1), a complex which activates the transcription of the type I interferon genes. Interacts with MECOM. Interacts with CITED1 (via C-terminus) Interacts with GATA1; the interaction results in acetylation and enhancement of transcriptional activity of GATA1. Interacts with FOXO1; the interaction acetylates FOXO1 and inhibits its transcriptional activity. Interacts with NPAS2, CLOCK and BMAL1. Interacts with ASF1A and ASF1B; this promotes histone acetylation. Interacts with acetylated TP53/p53 and with the acetylated histones H3 and H4. Interacts (via transactivation domain and C-terminus) with PCNA; the interaction occurs on chromatin in UV-irradiated damaged cells. Interacts with DHX9 (via N-terminus); this interaction mediates association with RNA polymerase II holoenzyme and stimulates CREB-dependent transcriptional activation. Interacts with SMAD4; negatively regulated by ZBTB7A. Forms a complex with KMT2A and CREB1. Interacts with DDX3X; this interaction may facilitate HNF4A acetylation. Interacts with MSX1; the interaction may inhibit MSX1 autoinactivation. Interacts with MSX3. Interacts with ACSS2. Methylation of the KIX domain by CARM1 blocks association with CREB. This results in the blockade of CREB signaling, and in activation of apoptotic response. Post-translationally, phosphorylated by CHUK/IKKA at Ser-1383 and Ser-1387; these phosphorylations promote cell growth by switching the binding preference of CREBBP from TP53 to NF-kappa-B. In terms of processing, sumoylation negatively regulates transcriptional activity via the recruitment of DAAX. Autoacetylation is required for binding to protein substrates, such as acetylated histones and acetylated TP53/p53. Autoacetylation is induced by glucose and fatty acids. In terms of tissue distribution, expressed in hypothalamus and cortex.

The protein localises to the cytoplasm. It is found in the nucleus. It catalyses the reaction L-lysyl-[histone] + acetyl-CoA = N(6)-acetyl-L-lysyl-[histone] + CoA + H(+). It carries out the reaction L-lysyl-[protein] + acetyl-CoA = N(6)-acetyl-L-lysyl-[protein] + CoA + H(+). The catalysed reaction is (S)-lactoyl-CoA + L-lysyl-[protein] = N(6)-[(S)-lactoyl]-L-lysyl-[protein] + CoA + H(+). Functionally, acetylates histones, giving a specific tag for transcriptional activation. Mediates acetylation of histone H3 at 'Lys-18' and 'Lys-27' (H3K18ac and H3K27ac, respectively). Also acetylates non-histone proteins, like DDX21, FBL, IRF2, MAFG, NCOA3, POLR1E/PAF53 and FOXO1. Binds specifically to phosphorylated CREB and enhances its transcriptional activity toward cAMP-responsive genes. Acts as a coactivator of ALX1. Acts as a circadian transcriptional coactivator which enhances the activity of the circadian transcriptional activators: NPAS2-BMAL1 and CLOCK-BMAL1 heterodimers. Acetylates PCNA; acetylation promotes removal of chromatin-bound PCNA and its degradation during nucleotide excision repair (NER). Acetylates POLR1E/PAF53, leading to decreased association of RNA polymerase I with the rDNA promoter region and coding region. Acetylates DDX21, thereby inhibiting DDX21 helicase activity. Acetylates FBL, preventing methylation of 'Gln-105' of histone H2A (H2AQ104me). In addition to protein acetyltransferase, can use different acyl-CoA substrates, such as lactoyl-CoA, and is able to mediate protein lactylation. Catalyzes lactylation of MRE11 in response to DNA damage, thereby promoting DNA double-strand breaks (DSBs) via homologous recombination (HR). Functions as a transcriptional coactivator for SMAD4 in the TGF-beta signaling pathway. This Rattus norvegicus (Rat) protein is Histone lysine acetyltransferase CREBBP (Crebbp).